The chain runs to 356 residues: Naringenin,2-oxoglutarate 3-dioxygenase (356 aa).

Residues 188 to 292 form the Fe2OG dioxygenase domain; it reads CVDMDQKVVV…RLSIATFQNP (105 aa). Fe cation is bound by residues histidine 215, aspartate 217, and histidine 273. Position 283 (arginine 283) interacts with 2-oxoglutarate.

It belongs to the iron/ascorbate-dependent oxidoreductase family. The cofactor is Fe(2+). Requires L-ascorbate as cofactor.

It carries out the reaction a (2S)-flavan-4-one + 2-oxoglutarate + O2 = a (2R,3R)-dihydroflavonol + succinate + CO2. Its pathway is secondary metabolite biosynthesis; flavonoid biosynthesis. Its function is as follows. Catalyzes the 3-beta-hydroxylation of 2S-flavanones to 2R,3R-dihydroflavonols which are intermediates in the biosynthesis of flavonols, anthocyanidins, catechins and proanthocyanidins in plants. The sequence is that of Naringenin,2-oxoglutarate 3-dioxygenase (FHT) from Callistephus chinensis (China aster).